The sequence spans 198 residues: NAD(P)H dehydrogenase (quinone) (198 aa).

Positions 4-189 (ILVLYYSMYG…SIARYQGEYV (186 aa)) constitute a Flavodoxin-like domain. Residues 10–15 (SMYGHI) and 78–80 (TRF) contribute to the FMN site. NAD(+) is bound at residue tyrosine 12. Residue tryptophan 98 participates in substrate binding. FMN-binding positions include 113 to 118 (STGTGG) and histidine 133.

It belongs to the WrbA family. FMN is required as a cofactor.

It catalyses the reaction a quinone + NADH + H(+) = a quinol + NAD(+). It carries out the reaction a quinone + NADPH + H(+) = a quinol + NADP(+). The polypeptide is NAD(P)H dehydrogenase (quinone) (Salmonella paratyphi A (strain ATCC 9150 / SARB42)).